Reading from the N-terminus, the 246-residue chain is NLP effector protein Pc118548 (246 aa).

A signal peptide spans 1-19; sequence MNFRAFLLAAIAGIATINA. The short motif at 122–128 is the Hepta-peptide GHRHDWE motif element; the sequence is GHRHYWE. N-linked (GlcNAc...) asparagine glycosylation is present at Asn-141.

This sequence belongs to the Necrosis inducing protein (NPP1) family.

It localises to the secreted. In terms of biological role, secreted effector that contributes strongly to virulence during infection by P.capsici. Induces cell death in the Solanaceae, including Nicotiana benthamiana and hot pepper. The chain is NLP effector protein Pc118548 from Phytophthora capsici.